The primary structure comprises 778 residues: Acyl-homoserine lactone acylase PvdQ (778 aa).

The first 25 residues, 1–25 (MTISRQFTGLTLAGLFLGLSLSAQA), serve as a signal peptide directing secretion. A propeptide spans 196 to 218 (IENNARAYQLADTRLQRFALDRG) (spacer peptide). Ser-219 serves as the catalytic Nucleophile.

Belongs to the peptidase S45 family. Heterodimer of an alpha subunit and a beta subunit processed from the same precursor.

The protein resides in the periplasm. The enzyme catalyses an N-acyl-L-homoserine lactone + H2O = L-homoserine lactone + a carboxylate. Its function is as follows. Catalyzes the deacylation of acyl-homoserine lactone (AHL or acyl-HSL), releasing homoserine lactone (HSL) and the corresponding fatty acid. Possesses a specificity for the degradation of long-chain acyl-HSLs (side chains of 11 to 14 carbons in length). This chain is Acyl-homoserine lactone acylase PvdQ (pvdQ), found in Pseudomonas fluorescens (strain Pf0-1).